Consider the following 412-residue polypeptide: cAMP-dependent protein kinase regulatory subunit (412 aa).

Polar residues predominate over residues 1–11; the sequence is MSNYSHSSNNP. The tract at residues 1–146 is disordered; the sequence is MSNYSHSSNN…TPPSHPKSEE (146 aa). Basic and acidic residues predominate over residues 16–29; sequence STKEDKPSSFHKIA. The dimerization and phosphorylation stretch occupies residues 23 to 159; it reads SSFHKIAEDE…RLKTAVSNNF (137 aa). Polar residues-rich tracts occupy residues 49 to 60 and 119 to 138; these read NADNSAGGNNPL and TSVSAESLNPTSAGSDSWTP. Ser120 is subject to Phosphoserine. Residues 160-291, Glu238, Arg247, 292-405, Glu359, and Arg368 each bind 3',5'-cyclic AMP; these read LFSH…EEVP and LLSS…TEYS.

Belongs to the cAMP-dependent kinase regulatory chain family. As to quaternary structure, tetramer, composed of 2 regulatory (R) and 2 catalytic (C) subunits. In the presence of cAMP it dissociates into 2 active monomeric C subunits and an R dimer.

The protein is cAMP-dependent protein kinase regulatory subunit (pkaR) of Emericella nidulans (strain FGSC A4 / ATCC 38163 / CBS 112.46 / NRRL 194 / M139) (Aspergillus nidulans).